Consider the following 180-residue polypeptide: Pro-glucagon (180 aa).

Residues 1–20 (MKSIYFVAGLFVMLVQGSWQ) form the signal peptide. Positions 26–59 (TEEKSRSFSASQADPLSDPDQMNEDKRHSQGTFT) are disordered. The residue at position 54 (Ser54) is a Phosphoserine. The propeptide occupies 84-89 (NRNNIA). A phosphoserine mark is found at Ser105 and Ser108. Arg127 is modified (arginine amide). A propeptide spanning residues 131 to 145 (DFPEEVAIVEELGRR) is cleaved from the precursor. Phosphoserine occurs at positions 150 and 152.

The protein belongs to the glucagon family. Proglucagon is post-translationally processed in a tissue-specific manner in pancreatic A cells and intestinal L cells. In pancreatic A cells, the major bioactive hormone is glucagon cleaved by PCSK2/PC2. In the intestinal L cells PCSK1/PC1 liberates GLP-1, GLP-2, glicentin and oxyntomodulin. GLP-1 is further N-terminally truncated by post-translational processing in the intestinal L cells resulting in GLP-1(7-37) GLP-1-(7-36)amide. The C-terminal amidation is neither important for the metabolism of GLP-1 nor for its effects on the endocrine pancreas. As to expression, secreted in the A cells of the islets of Langerhans. In terms of tissue distribution, secreted in the A cells of the islets of Langerhans. Secreted from enteroendocrine L cells throughout the gastrointestinal tract. Also secreted in selected neurons in the brain. Secreted from enteroendocrine cells throughout the gastrointestinal tract. Also secreted in selected neurons in the brain. As to expression, secreted from enteroendocrine cells throughout the gastrointestinal tract.

The protein resides in the secreted. Plays a key role in glucose metabolism and homeostasis. Regulates blood glucose by increasing gluconeogenesis and decreasing glycolysis. A counterregulatory hormone of insulin, raises plasma glucose levels in response to insulin-induced hypoglycemia. Plays an important role in initiating and maintaining hyperglycemic conditions in diabetes. In terms of biological role, potent stimulator of glucose-dependent insulin release. Also stimulates insulin release in response to IL6. Plays important roles on gastric motility and the suppression of plasma glucagon levels. May be involved in the suppression of satiety and stimulation of glucose disposal in peripheral tissues, independent of the actions of insulin. Has growth-promoting activities on intestinal epithelium. May also regulate the hypothalamic pituitary axis (HPA) via effects on LH, TSH, CRH, oxytocin, and vasopressin secretion. Increases islet mass through stimulation of islet neogenesis and pancreatic beta cell proliferation. Inhibits beta cell apoptosis. Functionally, stimulates intestinal growth and up-regulates villus height in the small intestine, concomitant with increased crypt cell proliferation and decreased enterocyte apoptosis. The gastrointestinal tract, from the stomach to the colon is the principal target for GLP-2 action. Plays a key role in nutrient homeostasis, enhancing nutrient assimilation through enhanced gastrointestinal function, as well as increasing nutrient disposal. Stimulates intestinal glucose transport and decreases mucosal permeability. Its function is as follows. Significantly reduces food intake. Inhibits gastric emptying in humans. Suppression of gastric emptying may lead to increased gastric distension, which may contribute to satiety by causing a sensation of fullness. May modulate gastric acid secretion and the gastro-pyloro-duodenal activity. May play an important role in intestinal mucosal growth in the early period of life. The sequence is that of Pro-glucagon from Homo sapiens (Human).